Reading from the N-terminus, the 81-residue chain is ATP synthase subunit c, chloroplastic (81 aa).

Transmembrane regions (helical) follow at residues 3–23 (PLVF…ASIG) and 57–77 (LAFM…LLFA).

It belongs to the ATPase C chain family. F-type ATPases have 2 components, F(1) - the catalytic core - and F(0) - the membrane proton channel. F(1) has five subunits: alpha(3), beta(3), gamma(1), delta(1), epsilon(1). F(0) has four main subunits: a(1), b(1), b'(1) and c(10-14). The alpha and beta chains form an alternating ring which encloses part of the gamma chain. F(1) is attached to F(0) by a central stalk formed by the gamma and epsilon chains, while a peripheral stalk is formed by the delta, b and b' chains.

Its subcellular location is the plastid. The protein localises to the chloroplast thylakoid membrane. F(1)F(0) ATP synthase produces ATP from ADP in the presence of a proton or sodium gradient. F-type ATPases consist of two structural domains, F(1) containing the extramembraneous catalytic core and F(0) containing the membrane proton channel, linked together by a central stalk and a peripheral stalk. During catalysis, ATP synthesis in the catalytic domain of F(1) is coupled via a rotary mechanism of the central stalk subunits to proton translocation. In terms of biological role, key component of the F(0) channel; it plays a direct role in translocation across the membrane. A homomeric c-ring of between 10-14 subunits forms the central stalk rotor element with the F(1) delta and epsilon subunits. The sequence is that of ATP synthase subunit c, chloroplastic from Atropa belladonna (Belladonna).